Here is a 224-residue protein sequence, read N- to C-terminus: Urease accessory protein UreF (224 aa).

Belongs to the UreF family. In terms of assembly, ureD, UreF and UreG form a complex that acts as a GTP-hydrolysis-dependent molecular chaperone, activating the urease apoprotein by helping to assemble the nickel containing metallocenter of UreC. The UreE protein probably delivers the nickel.

Its subcellular location is the cytoplasm. Required for maturation of urease via the functional incorporation of the urease nickel metallocenter. The protein is Urease accessory protein UreF of Pseudomonas entomophila (strain L48).